Consider the following 551-residue polypeptide: MNTRENNLKALHAPRKINLREEAGLLGVDIVTDIGEAQPRNEPVFLGYQRRWFEDESQICIAEKSRRTGLTWAEAGRNVMTAAKPKRRGGRNVFYVGSRQEMALEYIAACALFARAFNQLAKADVWEQTFWDSDKKEEILTYMIRFPNSGFKIQALSSRPSNLRGLQGDVVIDEAAFHEALDELLKAAFALNMWGASVRIISTHNGVDNLFNQYIQDAREGRKDYSVHRITLDDAIADGLYRRICYVTNQPWSPEAEKAWRDGLYRNAPNKESADEEYGCIPKKSGGAYLSRVLIEAAMTPARDIPVLRFEAPDDFESLTPQMRHGIVQDWCEQELLPLLDALSPLNKHVLGEDFARRGDLTVFVPLAITPDLRKRECFRVELRNVTYDQQRQILLFILSRLPRFTGAAFDATGNGGYLAEAARLIYGPEMIDCISLTPAWYQEWMPKLKGEFEAQNITIARHQTTLDDLLHIKVDKGIPQIDKGRTKDEGGKGRRHGDFAVALCMAVRASYMNGFVIDEDSIQALPPRHRGDDVDNDDFDDYHQFERGGW.

It belongs to the T4likevirus large terminase family. Interacts with the terminase small subunit gp28. The cofactor is Mg(2+).

The protein localises to the host cytoplasm. Functionally, the terminase large subunit acts as an ATP driven molecular motor necessary for viral DNA translocation into empty capsids and as an endonuclease that cuts the viral genome to initiate and to end a packaging reaction. The terminase lies at a unique vertex of the procapsid and is composed of two subunits, a small terminase subunit involved in viral DNA recognition (packaging sequence), and a large terminase subunit possessing endonucleolytic and ATPase activities. Both terminase subunits heterooligomerize and are docked on the portal protein to form the packaging machine. The terminase large subunit exhibits endonuclease activity and cleaves the viral genome concatemer once the capsid is full (headful packaging). Once the capsid is packaged with the DNA, the terminase complex is substituted by neck proteins. In Escherichia phage Mu (Bacteriophage Mu), this protein is Probable terminase, large subunit gp28.